We begin with the raw amino-acid sequence, 440 residues long: Argininosuccinate lyase (440 aa).

It belongs to the lyase 1 family. Argininosuccinate lyase subfamily.

The protein resides in the cytoplasm. The catalysed reaction is 2-(N(omega)-L-arginino)succinate = fumarate + L-arginine. Its pathway is amino-acid biosynthesis; L-arginine biosynthesis; L-arginine from L-ornithine and carbamoyl phosphate: step 3/3. The sequence is that of Argininosuccinate lyase from Clostridium botulinum (strain Okra / Type B1).